The chain runs to 420 residues: Probable glycosyltransferase YdaM (420 aa).

The next 4 membrane-spanning stretches (helical) occupy residues 4–24 (TLFFISLSLIWVMLLYHMFLM), 299–319 (IIFDLFYFFFTYFLFFFGVIM), 332–352 (LHLSVGFLAMILWILAFFLFM), and 371–391 (FFIVFLMYFTYSQAWIVLVIY).

Belongs to the glycosyltransferase 2 family.

It is found in the cell membrane. The protein is Probable glycosyltransferase YdaM (ydaM) of Bacillus subtilis (strain 168).